The primary structure comprises 205 residues: Small ribosomal subunit protein uS4 (205 aa).

Residues 94-157 (SRLDAVVYRA…RNLALVLEAL (64 aa)) enclose the S4 RNA-binding domain.

It belongs to the universal ribosomal protein uS4 family. In terms of assembly, part of the 30S ribosomal subunit. Contacts protein S5. The interaction surface between S4 and S5 is involved in control of translational fidelity.

One of the primary rRNA binding proteins, it binds directly to 16S rRNA where it nucleates assembly of the body of the 30S subunit. In terms of biological role, with S5 and S12 plays an important role in translational accuracy. The chain is Small ribosomal subunit protein uS4 from Hyphomonas neptunium (strain ATCC 15444).